A 250-amino-acid chain; its full sequence is 5'-nucleotidase SurE (250 aa).

Residues Asp-8, Asp-9, Ser-39, and Asn-91 each coordinate a divalent metal cation.

It belongs to the SurE nucleotidase family. It depends on a divalent metal cation as a cofactor.

The protein resides in the cytoplasm. It catalyses the reaction a ribonucleoside 5'-phosphate + H2O = a ribonucleoside + phosphate. Its function is as follows. Nucleotidase that shows phosphatase activity on nucleoside 5'-monophosphates. The protein is 5'-nucleotidase SurE of Shewanella halifaxensis (strain HAW-EB4).